The sequence spans 235 residues: Putative 4'-phosphopantetheinyl transferase HI_0152 (235 aa).

The Mg(2+) site is built by Asp-112, Glu-114, and Glu-155.

This sequence belongs to the P-Pant transferase superfamily. Gsp/Sfp/HetI/AcpT family. The cofactor is Mg(2+).

May transfer the 4'-phosphopantetheine moiety from coenzyme A (CoA) to a serine residue of a carrier protein domain. The polypeptide is Putative 4'-phosphopantetheinyl transferase HI_0152 (Haemophilus influenzae (strain ATCC 51907 / DSM 11121 / KW20 / Rd)).